The following is a 198-amino-acid chain: NAD(P)H dehydrogenase (quinone) (198 aa).

One can recognise a Flavodoxin-like domain in the interval 4–189 (ILVLYYSMYG…SIARYQGEYV (186 aa)). FMN is bound by residues 10–15 (SMYGHI) and 78–80 (TRF). Tyr-12 lines the NAD(+) pocket. Trp-98 contacts substrate. Residues 113–118 (STGTGG) and His-133 contribute to the FMN site.

Belongs to the WrbA family. The cofactor is FMN.

The enzyme catalyses a quinone + NADH + H(+) = a quinol + NAD(+). The catalysed reaction is a quinone + NADPH + H(+) = a quinol + NADP(+). This chain is NAD(P)H dehydrogenase (quinone), found in Salmonella agona (strain SL483).